The following is a 961-amino-acid chain: Copper-exporting P-type ATPase (961 aa).

HMA domains follow at residues 3–64 (QTTL…YQAT) and 69–130 (PDVE…YHAT). Cu(+) is bound by residues Cys-14, Cys-17, Cys-80, and Cys-83. Disordered regions lie at residues 131-153 (QQGIDSPKTEPLTHSAQSQPESL) and 178-201 (VLPTNTALPTNTTSTTSTADTASA). The segment covering 142–151 (LTHSAQSQPE) has biased composition (polar residues). Residues 226–289 (ESVQLLLTGM…AVKNAGYGAE (64 aa)) enclose the HMA 3 domain. 2 residues coordinate Cu(+): Cys-237 and Cys-240. The next 5 helical transmembrane spans lie at 316-336 (AALGLLLGIPLMAWGLFGGSM), 345-365 (PWLIIGIITLLVMIFAGGHFY), 381-401 (TLVALGTGAAWIYSITVNIWP), 565-585 (AVFVPTVVVIAIVAGLIWYFF), and 592-612 (VYTLVVATTVLIIACPCALGL). Asp-650 serves as the catalytic 4-aspartylphosphate intermediate. Mg(2+) contacts are provided by Asp-847 and Asp-851. 3 helical membrane-spanning segments follow: residues 860–880 (VGIAMGGGSDIAIETAAITLM), 906–926 (LGAFFYNALGIPIAAGILYPF), and 928–948 (GTLLSPVVAGAAMALSSITVV).

Belongs to the cation transport ATPase (P-type) (TC 3.A.3) family. Type IB subfamily.

Its subcellular location is the cell membrane. The catalysed reaction is Cu(+)(in) + ATP + H2O = Cu(+)(out) + ADP + phosphate + H(+). Involved in copper export. In Yersinia pestis, this protein is Copper-exporting P-type ATPase (copA).